The primary structure comprises 82 residues: Cytochrome b559 subunit alpha (82 aa).

The chain crosses the membrane as a helical span at residues 22–36 (VIHAVTLPSIFLAGY). H24 provides a ligand contact to heme.

The protein belongs to the PsbE/PsbF family. As to quaternary structure, heterodimer of an alpha subunit and a beta subunit. PSII is composed of 1 copy each of membrane proteins PsbA, PsbB, PsbC, PsbD, PsbE, PsbF, PsbH, PsbI, PsbJ, PsbK, PsbL, PsbM, PsbT, PsbX, PsbY, Psb30/Ycf12, peripheral proteins PsbO, CyanoQ (PsbQ), PsbU, PsbV and a large number of cofactors. It forms dimeric complexes. Heme b is required as a cofactor.

Its subcellular location is the cellular thylakoid membrane. Functionally, this b-type cytochrome is tightly associated with the reaction center of photosystem II (PSII). PSII is a light-driven water:plastoquinone oxidoreductase that uses light energy to abstract electrons from H(2)O, generating O(2) and a proton gradient subsequently used for ATP formation. It consists of a core antenna complex that captures photons, and an electron transfer chain that converts photonic excitation into a charge separation. The protein is Cytochrome b559 subunit alpha of Prochlorococcus marinus (strain MIT 9303).